A 119-amino-acid chain; its full sequence is Probable cyclase otaY (119 aa).

Belongs to the aurE cyclase family.

Its pathway is mycotoxin biosynthesis. Its function is as follows. Probable cyclase; part of the gene cluster that mediates the biosynthesis of ochratoxin A (OTA), a mycotoxin composed of a chlorinated type I polyketide dihydroisocoumarin moiety linked to L-phenylalanine, and demonstrated to have nephrotoxic, immunotoxic, genotoxic, neurotoxic, and teratogenic properties. OtaY is probably involved in the polyketide cyclization. The pathway begins with the highly reducing polyketide synthase otaA that catalyzes the formation of the isocoumarin group during the initial stages of biosynthesis, starting from one acetate and 4 malonate units, to originate the characteristic pentaketide skeleton 7-methylmellein (7-MM) of the OTA molecule. The newly identified cyclase otaY might be involved in the polyketide cyclization reaction during the initial steps of the OTA biosynthesis. 7-MM is then oxidized into 7-carboxymellein (also called ochratoxin beta) by the cytochrome P450 monooxygenase otaC. The NRPS encoded by the otaB gene is involved in the linking of phenylalanine to the dihydroisocoumarin ring. The reaction catalyzed by NRPS results in the production of ochratoxin B (OTB), which is the non-chlorinated analog of OTA and which subsequently serves as the substrate of the halogenase otaD for chlorination activity to form the final molecular structure of OTA, containing a chlorine atom in the C-5 position of the molecule. In Aspergillus niger (strain ATCC MYA-4892 / CBS 513.88 / FGSC A1513), this protein is Probable cyclase otaY.